The chain runs to 215 residues: Cytochrome b6 (215 aa).

A helical membrane pass occupies residues 32–52 (IFYCLGGITLTCFLVQVATGF). Heme c is bound at residue cysteine 35. Heme b contacts are provided by histidine 86 and histidine 100. 3 consecutive transmembrane segments (helical) span residues 90–110 (ASMMVLMMILHVFRVYLTGGF), 116–136 (LTWVTGVVLAVLTASFGVTGY), and 186–206 (LHTFVLPLLTAVFMLMHFPMI). The heme b site is built by histidine 187 and histidine 202.

It belongs to the cytochrome b family. PetB subfamily. The 4 large subunits of the cytochrome b6-f complex are cytochrome b6, subunit IV (17 kDa polypeptide, PetD), cytochrome f and the Rieske protein, while the 4 small subunits are PetG, PetL, PetM and PetN. The complex functions as a dimer. It depends on heme b as a cofactor. Heme c serves as cofactor.

Its subcellular location is the plastid. The protein localises to the chloroplast thylakoid membrane. Its function is as follows. Component of the cytochrome b6-f complex, which mediates electron transfer between photosystem II (PSII) and photosystem I (PSI), cyclic electron flow around PSI, and state transitions. This Cucumis sativus (Cucumber) protein is Cytochrome b6.